The chain runs to 258 residues: Eukaryotic translation initiation factor 3 subunit J (258 aa).

The span at 1–11 (MAAAAAAAGDS) shows a compositional bias: low complexity. Residues 1–108 (MAAAAAAAGD…LEEPEEPKVL (108 aa)) are disordered. A2 bears the N-acetylalanine mark. Residues 2-69 (AAAAAAAGDS…KEEAEVKPEV (68 aa)) form a sufficient for interaction with EIF3B region. Residues S11, S13, and S20 each carry the phosphoserine modification. A compositionally biased stretch (acidic residues) spans 40–59 (EGEDEDEDVKDNWDDDDDEK). A compositionally biased stretch (basic and acidic residues) spans 60-106 (KEEAEVKPEVKISEKKKIAEKIKEKERQQKKRQEEIKKRLEEPEEPK). A coiled-coil region spans residues 70–135 (KISEKKKIAE…ESDLELAKET (66 aa)). K106 participates in a covalent cross-link: Glycyl lysine isopeptide (Lys-Gly) (interchain with G-Cter in SUMO2). A Phosphothreonine modification is found at T109. S127 is subject to Phosphoserine. Residues 217 to 238 (SKAKKKKKGVVPGGGLKATMKD) are disordered. The promotes stable association with the 40S ribosome stretch occupies residues 243-258 (YGGYDGGYVQDYEDFM). Residue Y254 is modified to Phosphotyrosine.

Component of the eukaryotic translation initiation factor 3 (eIF-3) complex, which is composed of 13 subunits: EIF3A, EIF3B, EIF3C, EIF3D, EIF3E, EIF3F, EIF3G, EIF3H, EIF3I, EIF3J, EIF3K, EIF3L and EIF3M. The eIF-3 complex appears to include 3 stable modules: module A is composed of EIF3A, EIF3B, EIF3G and EIF3I; module B is composed of EIF3F, EIF3H, and EIF3M; and module C is composed of EIF3C, EIF3D, EIF3E, EIF3K and EIF3L. EIF3C of module C binds EIF3B of module A and EIF3H of module B, thereby linking the three modules. EIF3J is a labile subunit that binds to the eIF-3 complex via EIF3B. The eIF-3 complex interacts with RPS6KB1 under conditions of nutrient depletion. Mitogenic stimulation leads to binding and activation of a complex composed of MTOR and RPTOR, leading to phosphorylation and release of RPS6KB1 and binding of EIF4B to eIF-3. Phosphorylated. Phosphorylation is enhanced upon serum stimulation.

It is found in the cytoplasm. Its function is as follows. Component of the eukaryotic translation initiation factor 3 (eIF-3) complex, which is required for several steps in the initiation of protein synthesis. The eIF-3 complex associates with the 40S ribosome and facilitates the recruitment of eIF-1, eIF-1A, eIF-2:GTP:methionyl-tRNAi and eIF-5 to form the 43S pre-initiation complex (43S PIC). The eIF-3 complex stimulates mRNA recruitment to the 43S PIC and scanning of the mRNA for AUG recognition. The eIF-3 complex is also required for disassembly and recycling of post-termination ribosomal complexes and subsequently prevents premature joining of the 40S and 60S ribosomal subunits prior to initiation. The eIF-3 complex specifically targets and initiates translation of a subset of mRNAs involved in cell proliferation, including cell cycling, differentiation and apoptosis, and uses different modes of RNA stem-loop binding to exert either translational activation or repression. The polypeptide is Eukaryotic translation initiation factor 3 subunit J (Homo sapiens (Human)).